A 171-amino-acid chain; its full sequence is Photosystem I assembly protein Ycf3 (171 aa).

TPR repeat units follow at residues Ala-35–Ala-68, Ser-72–Leu-105, and Gly-120–Asn-153.

It belongs to the Ycf3 family.

The protein localises to the plastid. The protein resides in the chloroplast thylakoid membrane. Its function is as follows. Essential for the assembly of the photosystem I (PSI) complex. May act as a chaperone-like factor to guide the assembly of the PSI subunits. The chain is Photosystem I assembly protein Ycf3 from Nephroselmis olivacea (Green alga).